A 330-amino-acid chain; its full sequence is MKKIAIDAMGGDYAPKAIVEGVNQAISDFSDIEVQLYGDQKKIEKYLTVTERVSIIHTEEKINSDDEPAKAVRRKKQSSMVLGAKAVKDGVAQAFISAGNTGALLAAGLFVVGRIKGVDRPGLMSTMPTLDGVGFDMLDLGANAENTASHLHQYAILGSFYAKNVRGIEVPRVGLLNNGTEETKGDSLHKEAYELLAAEPSINFIGNIEARDLMSSVADVVVTDGFTGNAVLKTMEGTAMSIMGSLKSSIKSGGVKAKLGALLLKDSLYQLKDSMDYSSAGGAVLFGLKAPIVKCHGSSDSKAVYSTLKQVRTMLETQVVDQLVDAFTDE.

It belongs to the PlsX family. In terms of assembly, homodimer. Probably interacts with PlsY.

Its subcellular location is the cytoplasm. The enzyme catalyses a fatty acyl-[ACP] + phosphate = an acyl phosphate + holo-[ACP]. It participates in lipid metabolism; phospholipid metabolism. Its function is as follows. Catalyzes the reversible formation of acyl-phosphate (acyl-PO(4)) from acyl-[acyl-carrier-protein] (acyl-ACP). This enzyme utilizes acyl-ACP as fatty acyl donor, but not acyl-CoA. The polypeptide is Phosphate acyltransferase (Streptococcus agalactiae serotype III (strain NEM316)).